Consider the following 245-residue polypeptide: Acetylglutamate kinase (245 aa).

Residues 41 to 42 (GG), arginine 63, and asparagine 156 each bind substrate.

Belongs to the acetylglutamate kinase family. ArgB subfamily.

Its subcellular location is the cytoplasm. It catalyses the reaction N-acetyl-L-glutamate + ATP = N-acetyl-L-glutamyl 5-phosphate + ADP. The protein operates within amino-acid biosynthesis; L-arginine biosynthesis; N(2)-acetyl-L-ornithine from L-glutamate: step 2/4. In terms of biological role, catalyzes the ATP-dependent phosphorylation of N-acetyl-L-glutamate. The polypeptide is Acetylglutamate kinase (Streptococcus sanguinis (strain SK36)).